A 288-amino-acid chain; its full sequence is Shikimate dehydrogenase (NADP(+)) (288 aa).

Residues Ser21–Ser23 and Thr68 contribute to the shikimate site. The Proton acceptor role is filled by Lys72. Residue Glu84 coordinates NADP(+). Residues Asn93 and Asp108 each contribute to the shikimate site. NADP(+) is bound by residues Gly132–Ala136 and Leu230. Position 232 (Tyr232) interacts with shikimate. Gly253 contacts NADP(+).

The protein belongs to the shikimate dehydrogenase family. As to quaternary structure, homodimer.

The enzyme catalyses shikimate + NADP(+) = 3-dehydroshikimate + NADPH + H(+). The protein operates within metabolic intermediate biosynthesis; chorismate biosynthesis; chorismate from D-erythrose 4-phosphate and phosphoenolpyruvate: step 4/7. Involved in the biosynthesis of the chorismate, which leads to the biosynthesis of aromatic amino acids. Catalyzes the reversible NADPH linked reduction of 3-dehydroshikimate (DHSA) to yield shikimate (SA). This is Shikimate dehydrogenase (NADP(+)) from Gloeothece citriformis (strain PCC 7424) (Cyanothece sp. (strain PCC 7424)).